Here is a 600-residue protein sequence, read N- to C-terminus: Putative fucosyltransferase R654 (600 aa).

Belongs to the glycosyltransferase 10 family.

The sequence is that of Putative fucosyltransferase R654 from Acanthamoeba polyphaga mimivirus (APMV).